The primary structure comprises 129 residues: Small ribosomal subunit protein uS11 (129 aa).

This sequence belongs to the universal ribosomal protein uS11 family. Part of the 30S ribosomal subunit. Interacts with proteins S7 and S18. Binds to IF-3.

Functionally, located on the platform of the 30S subunit, it bridges several disparate RNA helices of the 16S rRNA. Forms part of the Shine-Dalgarno cleft in the 70S ribosome. This is Small ribosomal subunit protein uS11 from Bacillus cereus (strain G9842).